The primary structure comprises 201 residues: Orotidine 5'-phosphate decarboxylase (201 aa).

Substrate contacts are provided by residues D8, K26, 52 to 61 (DLKFCDIPST), T106, R153, Q161, G180, and R181. The active-site Proton donor is the K54.

It belongs to the OMP decarboxylase family. Type 1 subfamily. As to quaternary structure, homodimer.

It carries out the reaction orotidine 5'-phosphate + H(+) = UMP + CO2. Its pathway is pyrimidine metabolism; UMP biosynthesis via de novo pathway; UMP from orotate: step 2/2. In terms of biological role, catalyzes the decarboxylation of orotidine 5'-monophosphate (OMP) to uridine 5'-monophosphate (UMP). The sequence is that of Orotidine 5'-phosphate decarboxylase (pyrF) from Thermotoga maritima (strain ATCC 43589 / DSM 3109 / JCM 10099 / NBRC 100826 / MSB8).